Reading from the N-terminus, the 306-residue chain is ATP synthase F(1) complex subunit gamma, mitochondrial (306 aa).

A mitochondrion-targeting transit peptide spans 1–17 (MNSASKLFVVLASPANQ).

Belongs to the ATPase gamma chain family. In terms of assembly, component of the ATP synthase complex composed at least of ATP5F1A/subunit alpha, ATP5F1B/subunit beta, ATP5MC1/subunit c (homooctomer), MT-ATP6/subunit a, MT-ATP8/subunit 8, ATP5ME/subunit e, ATP5MF/subunit f, ATP5MG/subunit g, ATP5MK/subunit k, ATP5MJ/subunit j, ATP5F1C/subunit gamma, ATP5F1D/subunit delta, ATP5F1E/subunit epsilon, ATP5PF/subunit F6, ATP5PB/subunit b, ATP5PD/subunit d, ATP5PO/subunit OSCP. ATP synthase complex consists of a soluble F(1) head domain (subunits alpha(3) and beta(3)) - the catalytic core - and a membrane F(0) domain - the membrane proton channel (subunits c, a, 8, e, f, g, k and j). These two domains are linked by a central stalk (subunits gamma, delta, and epsilon) rotating inside the F1 region and a stationary peripheral stalk (subunits F6, b, d, and OSCP).

It localises to the mitochondrion inner membrane. In terms of biological role, subunit gamma, of the mitochondrial membrane ATP synthase complex (F(1)F(0) ATP synthase or Complex V) that produces ATP from ADP in the presence of a proton gradient across the membrane which is generated by electron transport complexes of the respiratory chain. ATP synthase complex consist of a soluble F(1) head domain - the catalytic core - and a membrane F(1) domain - the membrane proton channel. These two domains are linked by a central stalk rotating inside the F(1) region and a stationary peripheral stalk. During catalysis, ATP synthesis in the catalytic domain of F(1) is coupled via a rotary mechanism of the central stalk subunits to proton translocation. In vivo, can only synthesize ATP although its ATP hydrolase activity can be activated artificially in vitro. With the central stalk subunit delta, is essential for the biogenesis of F(1) catalytic part of the ATP synthase complex namely in the formation of F1 assembly intermediate. This chain is ATP synthase F(1) complex subunit gamma, mitochondrial, found in Dictyostelium discoideum (Social amoeba).